The sequence spans 274 residues: Protein bax (274 aa).

The span at 32–64 (TTASQKSHLTKASNKQVSSKQEYSRNSAKSSSL) shows a compositional bias: polar residues. The disordered stretch occupies residues 32–74 (TTASQKSHLTKASNKQVSSKQEYSRNSAKSSSLPDLRKYPSGT). 247 to 254 (GYSTKGKS) contacts ATP.

This chain is Protein bax (bax), found in Escherichia coli (strain K12).